The chain runs to 146 residues: Neuropeptide Y receptor type 2 (146 aa).

The Extracellular portion of the chain corresponds to 1–8 (KMGPVLCH). C7 and C87 are joined by a disulfide. A helical transmembrane segment spans residues 9–29 (LVPYAQGLAVQVSTITLTVIA). Residues 30–49 (LDRHRCIVYHLESKISKQIS) lie on the Cytoplasmic side of the membrane. The chain crosses the membrane as a helical span at residues 50-70 (FLIIGLAWGVSALLASPLAIF). The Extracellular portion of the chain corresponds to 71–100 (REYSLIEIIPDFEIVACTEKWPGEEKGIYG). Residues 101–121 (TVYSLLSLLILYVLPLGIISF) form a helical membrane-spanning segment. Topologically, residues 122–146 (SYARIWSKLKNHVSPGAAHDHYHQR) are cytoplasmic.

Belongs to the G-protein coupled receptor 1 family.

Its subcellular location is the cell membrane. In terms of biological role, receptor for neuropeptide Y and peptide YY. The polypeptide is Neuropeptide Y receptor type 2 (NPY2R) (Ovis aries (Sheep)).